Here is a 156-residue protein sequence, read N- to C-terminus: Lipoprotein signal peptidase (156 aa).

2 consecutive transmembrane segments (helical) span residues 57-77 (LFLI…LFIN) and 83-103 (ILKI…IDRI). Active-site residues include aspartate 110 and aspartate 129. Residues 124–144 (IFNIADVLVSLGTILLIIFII) form a helical membrane-spanning segment.

Belongs to the peptidase A8 family.

The protein localises to the cell membrane. It carries out the reaction Release of signal peptides from bacterial membrane prolipoproteins. Hydrolyzes -Xaa-Yaa-Zaa-|-(S,diacylglyceryl)Cys-, in which Xaa is hydrophobic (preferably Leu), and Yaa (Ala or Ser) and Zaa (Gly or Ala) have small, neutral side chains.. It functions in the pathway protein modification; lipoprotein biosynthesis (signal peptide cleavage). In terms of biological role, this protein specifically catalyzes the removal of signal peptides from prolipoproteins. The protein is Lipoprotein signal peptidase of Clostridium tetani (strain Massachusetts / E88).